Here is a 182-residue protein sequence, read N- to C-terminus: Crossover junction endodeoxyribonuclease RuvC (182 aa).

Residues D7, E68, and D141 contribute to the active site. Mg(2+)-binding residues include D7, E68, and D141.

Belongs to the RuvC family. Homodimer which binds Holliday junction (HJ) DNA. The HJ becomes 2-fold symmetrical on binding to RuvC with unstacked arms; it has a different conformation from HJ DNA in complex with RuvA. In the full resolvosome a probable DNA-RuvA(4)-RuvB(12)-RuvC(2) complex forms which resolves the HJ. Mg(2+) is required as a cofactor.

The protein localises to the cytoplasm. The catalysed reaction is Endonucleolytic cleavage at a junction such as a reciprocal single-stranded crossover between two homologous DNA duplexes (Holliday junction).. Functionally, the RuvA-RuvB-RuvC complex processes Holliday junction (HJ) DNA during genetic recombination and DNA repair. Endonuclease that resolves HJ intermediates. Cleaves cruciform DNA by making single-stranded nicks across the HJ at symmetrical positions within the homologous arms, yielding a 5'-phosphate and a 3'-hydroxyl group; requires a central core of homology in the junction. The consensus cleavage sequence is 5'-(A/T)TT(C/G)-3'. Cleavage occurs on the 3'-side of the TT dinucleotide at the point of strand exchange. HJ branch migration catalyzed by RuvA-RuvB allows RuvC to scan DNA until it finds its consensus sequence, where it cleaves and resolves the cruciform DNA. This chain is Crossover junction endodeoxyribonuclease RuvC, found in Thermobifida fusca (strain YX).